The following is a 929-amino-acid chain: Bifunctional uridylyltransferase/uridylyl-removing enzyme (929 aa).

Residues 1 to 379 are uridylyltransferase; sequence MSPSRPAADE…RPAAKRRRVP (379 aa). Residues 380–735 form a uridylyl-removing region; the sequence is ESDDFVIDNN…VGFDEARAVT (356 aa). Residues 495–618 enclose the HD domain; the sequence is VDEHLIRCVG…VETVEQMKML (124 aa). ACT domains lie at 736–818 and 849–929; these read ELTI…AVAR and VIEV…KPAA.

It belongs to the GlnD family. Mg(2+) serves as cofactor.

The enzyme catalyses [protein-PII]-L-tyrosine + UTP = [protein-PII]-uridylyl-L-tyrosine + diphosphate. It carries out the reaction [protein-PII]-uridylyl-L-tyrosine + H2O = [protein-PII]-L-tyrosine + UMP + H(+). Its activity is regulated as follows. Uridylyltransferase (UTase) activity is inhibited by glutamine, while glutamine activates uridylyl-removing (UR) activity. Functionally, modifies, by uridylylation and deuridylylation, the PII regulatory proteins (GlnB and homologs), in response to the nitrogen status of the cell that GlnD senses through the glutamine level. Under low glutamine levels, catalyzes the conversion of the PII proteins and UTP to PII-UMP and PPi, while under higher glutamine levels, GlnD hydrolyzes PII-UMP to PII and UMP (deuridylylation). Thus, controls uridylylation state and activity of the PII proteins, and plays an important role in the regulation of nitrogen fixation and metabolism. This Rhodopseudomonas palustris (strain ATCC BAA-98 / CGA009) protein is Bifunctional uridylyltransferase/uridylyl-removing enzyme.